Reading from the N-terminus, the 121-residue chain is MARVKRGVTSHAKHKKVLKAAKGYYGRRKNTIRIAKQAVEKGLQYAYRDRKNKKRTFRALWIQRLNAAVREHGLTYSRFINALAQSGIEVDRKALSELAIHEPAAFAAVVEKAKSALPKAA.

It belongs to the bacterial ribosomal protein bL20 family.

Binds directly to 23S ribosomal RNA and is necessary for the in vitro assembly process of the 50S ribosomal subunit. It is not involved in the protein synthesizing functions of that subunit. The sequence is that of Large ribosomal subunit protein bL20 from Methylorubrum extorquens (strain PA1) (Methylobacterium extorquens).